A 100-amino-acid chain; its full sequence is Urease subunit gamma (100 aa).

It belongs to the urease gamma subunit family. As to quaternary structure, heterotrimer of UreA (gamma), UreB (beta) and UreC (alpha) subunits. Three heterotrimers associate to form the active enzyme.

Its subcellular location is the cytoplasm. It catalyses the reaction urea + 2 H2O + H(+) = hydrogencarbonate + 2 NH4(+). It participates in nitrogen metabolism; urea degradation; CO(2) and NH(3) from urea (urease route): step 1/1. This chain is Urease subunit gamma, found in Mycobacteroides abscessus (strain ATCC 19977 / DSM 44196 / CCUG 20993 / CIP 104536 / JCM 13569 / NCTC 13031 / TMC 1543 / L948) (Mycobacterium abscessus).